Reading from the N-terminus, the 519-residue chain is Zinc finger protein 692 (519 aa).

Residues 123-314 (GPSLSPTPSE…PAWDEDTAQI (192 aa)) are disordered. Polar residues predominate over residues 145-155 (RSWCSEATSGQ). Serine 162 is modified (phosphoserine). Over residues 164 to 173 (HDERTQEARL) the composition is skewed to basic and acidic residues. Pro residues predominate over residues 177-187 (VGPPPETFPPP). The segment covering 188–206 (GEEEGEEEEDNDEDEEEML) has biased composition (acidic residues). Serine 231 carries the post-translational modification Phosphoserine. Residues 247 to 266 (AALSSPLAVPALSASSLSSR) show a composition bias toward low complexity. A compositionally biased stretch (polar residues) spans 277-303 (PQLSRTPQAAQQTEALASTGSQAQSAP). 5 consecutive C2H2-type zinc fingers follow at residues 328 to 353 (MPCD…KYQH), 359 to 383 (FSCP…MKLH), 389 to 411 (YICE…RRIH), 417 to 439 (LQCE…QRKH), and 448 to 471 (FPCE…SKSH). The interval 469 to 519 (KSHPALLLAPQESPSGPLEPCPSISAPGPLGSSEGSRPSASPQAPTLLPQQ) is disordered. At serine 470 the chain carries Phosphoserine; by AMPK. The segment covering 501–519 (SEGSRPSASPQAPTLLPQQ) has biased composition (polar residues).

The protein belongs to the krueppel C2H2-type zinc-finger protein family. Post-translationally, phosphorylation at Ser-470 results in loss of DNA-binding activity. In terms of tissue distribution, ubiquitous. Highly expressed in brain, thymus and spleen.

The protein localises to the nucleus. In terms of biological role, may act as an transcriptional repressor for PCK1 gene expression, in turn may participate in the hepatic gluconeogenesis regulation through the activated AMPK signaling pathway. This Homo sapiens (Human) protein is Zinc finger protein 692 (ZNF692).